Here is a 608-residue protein sequence, read N- to C-terminus: Cytoplasmic dynein 1 intermediate chain 1 (608 aa).

2 stretches are compositionally biased toward basic and acidic residues: residues 1 to 13 and 20 to 60; these read MSDKSDLKAELER and QIRE…RETE. The disordered stretch occupies residues 1–106; that stretch reads MSDKSDLKAE…SGDLGPLTRR (106 aa). At serine 2 the chain carries N-acetylserine. Serine 50 is subject to Phosphoserine. The segment covering 70–79 has biased composition (pro residues); the sequence is PEPPLVPTPM. Residues 80–90 are compositionally biased toward low complexity; sequence SPSSKSVSTPS. Serine 83 bears the Phosphoserine mark. At threonine 88 the chain carries Phosphothreonine. Residues serine 90, serine 94, and serine 97 each carry the phosphoserine modification. The segment at 110 to 126 is interaction with DYNLT1; it reads KLGVSKITQVDFLPREV. Residues 132–184 are disordered; it reads ETQTPLATHQSEEDEDDEEMVEPKGDQDSEQENEDKKQEVKEAPPRELTEEEK. Residue threonine 139 is modified to Phosphothreonine. Serine 142 and serine 160 each carry phosphoserine. Positions 165–184 are enriched in basic and acidic residues; sequence EDKKQEVKEAPPRELTEEEK. WD repeat units lie at residues 248 to 297, 301 to 341, 350 to 391, 400 to 440, 445 to 490, 493 to 533, and 539 to 578; these read SKHR…TTPE, HCQS…RTPV, AHTH…TPQE, SKPV…AGIG, GHQG…PLYS, DNAD…EVPT, and EGASALNRVRWAQGGKEVAVGDSEGRIWIYDVGELAVPHN. A Phosphoserine modification is found at serine 598.

This sequence belongs to the dynein intermediate chain family. Homodimer. The cytoplasmic dynein 1 complex consists of two catalytic heavy chains (HCs) and a number of non-catalytic subunits presented by intermediate chains (ICs), light intermediate chains (LICs) and light chains (LCs); the composition seems to vary in respect to the IC, LIC and LC composition. The heavy chain homodimer serves as a scaffold for the probable homodimeric assembly of the respective non-catalytic subunits. The ICs and LICs bind directly to the HC dimer and the LCs assemble on the IC dimer. Interacts with DYNC1H1. Interacts with DYNLT1 and DYNLT3. Interacts with DCTN1. Interacts with MCRS1; the interaction is required for the proper distribution of centriolar satellites.

It localises to the cytoplasm. Its subcellular location is the chromosome. The protein localises to the centromere. It is found in the kinetochore. The protein resides in the cytoskeleton. It localises to the spindle pole. Acts as one of several non-catalytic accessory components of the cytoplasmic dynein 1 complex that are thought to be involved in linking dynein to cargos and to adapter proteins that regulate dynein function. Cytoplasmic dynein 1 acts as a motor for the intracellular retrograde motility of vesicles and organelles along microtubules. The intermediate chains mediate the binding of dynein to dynactin via its 150 kDa component (p150-glued) DCTN1. May play a role in mediating the interaction of cytoplasmic dynein with membranous organelles and kinetochores. This chain is Cytoplasmic dynein 1 intermediate chain 1 (DYNC1I1), found in Bos taurus (Bovine).